Here is a 420-residue protein sequence, read N- to C-terminus: Probable pectate lyase C (420 aa).

Positions 1–20 (MKLSEPLLVSLAAFSQAVTA) are cleaved as a signal peptide. N49, N165, and N202 each carry an N-linked (GlcNAc...) asparagine glycan. R205 is an active-site residue. The EF-hand domain maps to 262 to 297 (NANFHGYVQNNYYDPDKDGQLDGFELGVSSSNYGGM). The Ca(2+) site is built by D275, D277, D279, Q281, and E286. Residues 358-396 (TMGGPGTLNGGTPAKDTDGDGIPDEAEKQLGTDPNTNDS) are disordered. N-linked (GlcNAc...) asparagine glycosylation occurs at N394.

It belongs to the polysaccharide lyase 1 family. Ca(2+) serves as cofactor.

The protein resides in the secreted. The enzyme catalyses Eliminative cleavage of (1-&gt;4)-alpha-D-galacturonan to give oligosaccharides with 4-deoxy-alpha-D-galact-4-enuronosyl groups at their non-reducing ends.. Its function is as follows. Pectinolytic enzyme consist of four classes of enzymes: pectin lyase, polygalacturonase, pectin methylesterase and rhamnogalacturonase. Among pectinolytic enzymes, pectin lyase is the most important in depolymerization of pectin, since it cleaves internal glycosidic bonds of highly methylated pectins. Favors pectate, the anion, over pectin, the methyl ester. This is Probable pectate lyase C (plyC) from Aspergillus fumigatus (strain ATCC MYA-4609 / CBS 101355 / FGSC A1100 / Af293) (Neosartorya fumigata).